The chain runs to 347 residues: Heat-inducible transcription repressor HrcA (347 aa).

The protein belongs to the HrcA family.

Its function is as follows. Negative regulator of class I heat shock genes (grpE-dnaK-dnaJ and groELS operons). Prevents heat-shock induction of these operons. This Rhodococcus erythropolis (strain PR4 / NBRC 100887) protein is Heat-inducible transcription repressor HrcA.